Here is a 306-residue protein sequence, read N- to C-terminus: Probable histidinol-phosphatase (306 aa).

This sequence belongs to the PHP hydrolase family. HisK subfamily.

It catalyses the reaction L-histidinol phosphate + H2O = L-histidinol + phosphate. It functions in the pathway amino-acid biosynthesis; L-histidine biosynthesis; L-histidine from 5-phospho-alpha-D-ribose 1-diphosphate: step 8/9. This Schizosaccharomyces pombe (strain 972 / ATCC 24843) (Fission yeast) protein is Probable histidinol-phosphatase.